A 79-amino-acid chain; its full sequence is Acyl carrier protein (79 aa).

In terms of domain architecture, Carrier spans 2–77; the sequence is SDIEARVKKI…NAIDYANTHH (76 aa). An O-(pantetheine 4'-phosphoryl)serine modification is found at S37.

The protein belongs to the acyl carrier protein (ACP) family. 4'-phosphopantetheine is transferred from CoA to a specific serine of apo-ACP by AcpS. This modification is essential for activity because fatty acids are bound in thioester linkage to the sulfhydryl of the prosthetic group.

It localises to the cytoplasm. It functions in the pathway lipid metabolism; fatty acid biosynthesis. In terms of biological role, carrier of the growing fatty acid chain in fatty acid biosynthesis. The chain is Acyl carrier protein from Polaromonas naphthalenivorans (strain CJ2).